The chain runs to 393 residues: NADH-quinone oxidoreductase subunit D (393 aa).

This sequence belongs to the complex I 49 kDa subunit family. In terms of assembly, NDH-1 is composed of 14 different subunits. Subunits NuoB, C, D, E, F, and G constitute the peripheral sector of the complex.

The protein localises to the cell inner membrane. The catalysed reaction is a quinone + NADH + 5 H(+)(in) = a quinol + NAD(+) + 4 H(+)(out). NDH-1 shuttles electrons from NADH, via FMN and iron-sulfur (Fe-S) centers, to quinones in the respiratory chain. The immediate electron acceptor for the enzyme in this species is believed to be ubiquinone. Couples the redox reaction to proton translocation (for every two electrons transferred, four hydrogen ions are translocated across the cytoplasmic membrane), and thus conserves the redox energy in a proton gradient. The protein is NADH-quinone oxidoreductase subunit D of Ehrlichia ruminantium (strain Gardel).